The chain runs to 575 residues: Potassium-transporting ATPase potassium-binding subunit (575 aa).

The next 12 helical transmembrane spans lie at 3 to 23 (FEGV…VPFF), 69 to 89 (AVLA…LLQG), 136 to 156 (CFQF…IAFI), 178 to 198 (ILMP…VPQS), 266 to 286 (LLEI…FGVL), 293 to 313 (GWVL…VAAL), 340 to 360 (FGWA…TGAV), 367 to 387 (LTPL…IWGG), 391 to 411 (GIAY…LMVG), 431 to 451 (IIFL…LAIP), 498 to 518 (VVLL…AGGL), and 543 to 563 (AGTI…LGPI).

The protein belongs to the KdpA family. As to quaternary structure, the system is composed of three essential subunits: KdpA, KdpB and KdpC.

The protein localises to the cell inner membrane. In terms of biological role, part of the high-affinity ATP-driven potassium transport (or Kdp) system, which catalyzes the hydrolysis of ATP coupled with the electrogenic transport of potassium into the cytoplasm. This subunit binds the periplasmic potassium ions and delivers the ions to the membrane domain of KdpB through an intramembrane tunnel. This chain is Potassium-transporting ATPase potassium-binding subunit, found in Gloeobacter violaceus (strain ATCC 29082 / PCC 7421).